A 308-amino-acid chain; its full sequence is Ribosomal RNA small subunit methyltransferase H (308 aa).

Residues Gly31–His33, Asp51, Phe75, Asp97, and Gln104 contribute to the S-adenosyl-L-methionine site.

The protein belongs to the methyltransferase superfamily. RsmH family.

It localises to the cytoplasm. The enzyme catalyses cytidine(1402) in 16S rRNA + S-adenosyl-L-methionine = N(4)-methylcytidine(1402) in 16S rRNA + S-adenosyl-L-homocysteine + H(+). In terms of biological role, specifically methylates the N4 position of cytidine in position 1402 (C1402) of 16S rRNA. The chain is Ribosomal RNA small subunit methyltransferase H from Tolumonas auensis (strain DSM 9187 / NBRC 110442 / TA 4).